We begin with the raw amino-acid sequence, 322 residues long: Secretion system apparatus protein SsaQ (322 aa).

It belongs to the FliN/MopA/SpaO family.

Part of a type III secretion system. The sequence is that of Secretion system apparatus protein SsaQ (ssaQ) from Salmonella typhimurium (strain LT2 / SGSC1412 / ATCC 700720).